A 409-amino-acid chain; its full sequence is Glutamyl-tRNA reductase (409 aa).

Residues 46 to 49 (TCNR), S88, 93 to 95 (ENE), and Q99 contribute to the substrate site. The active-site Nucleophile is C47. Residue 164–169 (GNGMIA) participates in NADP(+) binding.

It belongs to the glutamyl-tRNA reductase family. In terms of assembly, homodimer.

The catalysed reaction is (S)-4-amino-5-oxopentanoate + tRNA(Glu) + NADP(+) = L-glutamyl-tRNA(Glu) + NADPH + H(+). The protein operates within porphyrin-containing compound metabolism; protoporphyrin-IX biosynthesis; 5-aminolevulinate from L-glutamyl-tRNA(Glu): step 1/2. In terms of biological role, catalyzes the NADPH-dependent reduction of glutamyl-tRNA(Glu) to glutamate 1-semialdehyde (GSA). This chain is Glutamyl-tRNA reductase, found in Thermoplasma acidophilum (strain ATCC 25905 / DSM 1728 / JCM 9062 / NBRC 15155 / AMRC-C165).